The primary structure comprises 156 residues: Small ribosomal subunit protein uS7 (156 aa).

It belongs to the universal ribosomal protein uS7 family. In terms of assembly, part of the 30S ribosomal subunit. Contacts proteins S9 and S11.

Its function is as follows. One of the primary rRNA binding proteins, it binds directly to 16S rRNA where it nucleates assembly of the head domain of the 30S subunit. Is located at the subunit interface close to the decoding center, probably blocks exit of the E-site tRNA. In Rhodococcus opacus (strain B4), this protein is Small ribosomal subunit protein uS7.